Consider the following 188-residue polypeptide: MKASEMKKGSIVEYNNGTYQIRDIQRSSPQGRGGNVRFRFVMYSVPGGSKLEASFDADEMLTAVELLRREASFSYKDGEAFVFLDEENYTLYTLDAEAIGDNAGYISEGLSGCYVQLIDASPVALQLPQHVVLEVVDTPPELKGGTATKRPKPAKLITGIEVMVPEYITTGERILVNTTTGAFGGRAS.

Belongs to the elongation factor P family.

The protein is Elongation factor P-like protein of Xylella fastidiosa (strain M12).